Reading from the N-terminus, the 148-residue chain is Putative cyclin-dependent kinase inhibitor SPL2 (148 aa).

Phosphoserine is present on residues S59 and S86.

Its subcellular location is the cytoplasmic granule. It localises to the cytoplasm. Its function is as follows. Putative cyclin-dependent kinase (CDK) inhibitor necessary and sufficient for PHO pathway-dependent down-regulation of low-affinity phosphate transport. The polypeptide is Putative cyclin-dependent kinase inhibitor SPL2 (SPL2) (Saccharomyces cerevisiae (strain YJM789) (Baker's yeast)).